Here is a 98-residue protein sequence, read N- to C-terminus: Flagellar hook-basal body complex protein FliE (98 aa).

It belongs to the FliE family.

It localises to the bacterial flagellum basal body. In Listeria monocytogenes serovar 1/2a (strain ATCC BAA-679 / EGD-e), this protein is Flagellar hook-basal body complex protein FliE.